A 410-amino-acid polypeptide reads, in one-letter code: MRVNGYRGAKVGAVDTTSPPEVPASARLQRLAPMLLVVSILARLAWTYLVPNGANFVDLHVYVGGADALDGPGALYDYVYADQTPDFPLPFTYPPFAAIVFYPLHLLPFGVVAFIWQIGIIAALYGVVRVSQRLMGLQSQRRVAMLWTALGIWTEPLRSTFDYGQVNVVLVLAVLCAVSTTRWWLSGLLVGLAAGIKLTPAVAGLYFLGARRWAAVACSAAVFFATVGVSWLVVGAQARRYFTELLGDADRIGPIGTSFNQSWRGGISRILGHDAGFGPLVLIGIGITAVLALLAWRAIGGAQDRLGGILVVSLFGLVLSPISWTHHWVWLIPLMMWLLHGPLSALRGARILGWGWLALTLLGVPWLLSFAQPTIWEIGRPWYLAWAGLVYIVATLATLGWIAFSRKGSG.

10 helical membrane passes run 31–51, 96–116, 160–180, 188–208, 214–234, 276–296, 306–326, 328–348, 351–371, and 384–404; these read LAPMLLVVSILARLAWTYLVP, FAAIVFYPLHLLPFGVVAFIW, TFDYGQVNVVLVLAVLCAVST, LLVGLAAGIKLTPAVAGLYFL, AAVACSAAVFFATVGVSWLVV, GFGPLVLIGIGITAVLALLAW, LGGILVVSLFGLVLSPISWTH, WVWLIPLMMWLLHGPLSALRG, ILGWGWLALTLLGVPWLLSFA, and LAWAGLVYIVATLATLGWIAF.

It belongs to the glycosyltransferase 87 family.

Its subcellular location is the cell membrane. It functions in the pathway phospholipid metabolism; phosphatidylinositol metabolism. Catalyzes the alpha-1,2 addition of a mannose residue from polyprenol-phosphate-mannose (PPM) to a monoacyl phosphatidylinositol tetramannoside (AcPIM4) to generate a monoacyl phosphatidylinositol pentamannoside (AcPIM5). In Mycolicibacterium smegmatis (strain ATCC 700084 / mc(2)155) (Mycobacterium smegmatis), this protein is Polyprenol-phosphate-mannose-dependent alpha-(1-2)-phosphatidylinositol pentamannoside mannosyltransferase.